The primary structure comprises 237 residues: Large ribosomal subunit protein uL2 (237 aa).

Positions 202-237 (FGGGNRKHPGKPTTVSRNAPPGRKVGHIAARRTGKR) are disordered. Positions 225 to 237 (KVGHIAARRTGKR) are enriched in basic residues.

The protein belongs to the universal ribosomal protein uL2 family. In terms of assembly, part of the 50S ribosomal subunit. Forms a bridge to the 30S subunit in the 70S ribosome.

Functionally, one of the primary rRNA binding proteins. Required for association of the 30S and 50S subunits to form the 70S ribosome, for tRNA binding and peptide bond formation. It has been suggested to have peptidyltransferase activity; this is somewhat controversial. Makes several contacts with the 16S rRNA in the 70S ribosome. The chain is Large ribosomal subunit protein uL2 from Methanococcoides burtonii (strain DSM 6242 / NBRC 107633 / OCM 468 / ACE-M).